A 698-amino-acid polypeptide reads, in one-letter code: Elongation factor G 1 (698 aa).

Positions 8–290 (ERYRNIGICA…AVIEFLPAPV (283 aa)) constitute a tr-type G domain. Residues 17–24 (AHVDAGKT), 88–92 (DTPGH), and 142–145 (NKMD) each bind GTP.

This sequence belongs to the TRAFAC class translation factor GTPase superfamily. Classic translation factor GTPase family. EF-G/EF-2 subfamily.

The protein localises to the cytoplasm. Catalyzes the GTP-dependent ribosomal translocation step during translation elongation. During this step, the ribosome changes from the pre-translocational (PRE) to the post-translocational (POST) state as the newly formed A-site-bound peptidyl-tRNA and P-site-bound deacylated tRNA move to the P and E sites, respectively. Catalyzes the coordinated movement of the two tRNA molecules, the mRNA and conformational changes in the ribosome. This chain is Elongation factor G 1, found in Aliivibrio fischeri (strain ATCC 700601 / ES114) (Vibrio fischeri).